We begin with the raw amino-acid sequence, 755 residues long: Cellulose synthase-like protein B3 (755 aa).

Helical transmembrane passes span 24-44 (VVDLTILGFLFSLLLYRILLM) and 51-71 (WVVAFLCESFFSFIWLLITSI). Residues Asp136 and Asp461 contribute to the active site. Helical transmembrane passes span 534-556 (YLYIFTWGLRSIPELIYCLLPAY), 569-589 (VYLGIVVTLVGMHCLYSLWEF), 615-635 (LFSIPDIILKLLGISKTVFIV), 674-694 (FLPGTFILLVNLAALAGCSVG), 702-722 (GSGLAEACGCILVVILFLPFL), and 733-753 (IPWSTLSKAAFLAVLFVVFSV).

It belongs to the glycosyltransferase 2 family. Plant cellulose synthase-like B subfamily. As to expression, expressed in young seedlings, primarily in the vascular tissue.

Its subcellular location is the golgi apparatus membrane. Thought to be a Golgi-localized beta-glycan synthase that polymerize the backbones of noncellulosic polysaccharides (hemicelluloses) of plant cell wall. The sequence is that of Cellulose synthase-like protein B3 (CSLB3) from Arabidopsis thaliana (Mouse-ear cress).